Reading from the N-terminus, the 202-residue chain is Glycerol-3-phosphate acyltransferase (202 aa).

6 helical membrane-spanning segments follow: residues 2–22 (MIVVMLILSYLIGAIPNGYVI), 54–74 (FIVTFLDIFKGFITVFFPIWF), 85–105 (FFTHGLIVGLFAILGHVYPIY), 120–140 (VVLGVNPILLLILAIIFFGVL), 141–161 (YIFKYVSLSSIIAAICCVIGS), and 162–182 (LIIQDYILFGMSLLVSIILIV).

Belongs to the PlsY family. Probably interacts with PlsX.

It is found in the cell membrane. It carries out the reaction an acyl phosphate + sn-glycerol 3-phosphate = a 1-acyl-sn-glycero-3-phosphate + phosphate. It functions in the pathway lipid metabolism; phospholipid metabolism. In terms of biological role, catalyzes the transfer of an acyl group from acyl-phosphate (acyl-PO(4)) to glycerol-3-phosphate (G3P) to form lysophosphatidic acid (LPA). This enzyme utilizes acyl-phosphate as fatty acyl donor, but not acyl-CoA or acyl-ACP. The protein is Glycerol-3-phosphate acyltransferase of Staphylococcus haemolyticus (strain JCSC1435).